A 173-amino-acid chain; its full sequence is Crossover junction endodeoxyribonuclease RuvC (173 aa).

Active-site residues include aspartate 8, glutamate 67, and aspartate 139. Mg(2+)-binding residues include aspartate 8, glutamate 67, and aspartate 139.

It belongs to the RuvC family. As to quaternary structure, homodimer which binds Holliday junction (HJ) DNA. The HJ becomes 2-fold symmetrical on binding to RuvC with unstacked arms; it has a different conformation from HJ DNA in complex with RuvA. In the full resolvosome a probable DNA-RuvA(4)-RuvB(12)-RuvC(2) complex forms which resolves the HJ. It depends on Mg(2+) as a cofactor.

The protein resides in the cytoplasm. It carries out the reaction Endonucleolytic cleavage at a junction such as a reciprocal single-stranded crossover between two homologous DNA duplexes (Holliday junction).. The RuvA-RuvB-RuvC complex processes Holliday junction (HJ) DNA during genetic recombination and DNA repair. Endonuclease that resolves HJ intermediates. Cleaves cruciform DNA by making single-stranded nicks across the HJ at symmetrical positions within the homologous arms, yielding a 5'-phosphate and a 3'-hydroxyl group; requires a central core of homology in the junction. The consensus cleavage sequence is 5'-(A/T)TT(C/G)-3'. Cleavage occurs on the 3'-side of the TT dinucleotide at the point of strand exchange. HJ branch migration catalyzed by RuvA-RuvB allows RuvC to scan DNA until it finds its consensus sequence, where it cleaves and resolves the cruciform DNA. This Salmonella agona (strain SL483) protein is Crossover junction endodeoxyribonuclease RuvC.